The chain runs to 183 residues: Translation initiation factor IF-3 (183 aa).

The protein belongs to the IF-3 family. Monomer.

It localises to the cytoplasm. Its function is as follows. IF-3 binds to the 30S ribosomal subunit and shifts the equilibrium between 70S ribosomes and their 50S and 30S subunits in favor of the free subunits, thus enhancing the availability of 30S subunits on which protein synthesis initiation begins. The sequence is that of Translation initiation factor IF-3 from Azobacteroides pseudotrichonymphae genomovar. CFP2.